The chain runs to 461 residues: tRNA modification GTPase MnmE (461 aa).

(6S)-5-formyl-5,6,7,8-tetrahydrofolate is bound by residues Lys-32, Glu-89, and Lys-128. In terms of domain architecture, TrmE-type G spans 224-387 (GHALSIVGKP…LSQKISAFFP (164 aa)). Asn-234 is a binding site for K(+). GTP is bound by residues 234–239 (NAGKSS), 253–259 (SDIKGTT), and 278–281 (DTAG). Ser-238 is a Mg(2+) binding site. Positions 253, 255, and 258 each coordinate K(+). Position 259 (Thr-259) interacts with Mg(2+). Lys-461 contacts (6S)-5-formyl-5,6,7,8-tetrahydrofolate.

Belongs to the TRAFAC class TrmE-Era-EngA-EngB-Septin-like GTPase superfamily. TrmE GTPase family. As to quaternary structure, homodimer. Heterotetramer of two MnmE and two MnmG subunits. The cofactor is K(+).

It is found in the cytoplasm. In terms of biological role, exhibits a very high intrinsic GTPase hydrolysis rate. Involved in the addition of a carboxymethylaminomethyl (cmnm) group at the wobble position (U34) of certain tRNAs, forming tRNA-cmnm(5)s(2)U34. In Helicobacter pylori (strain ATCC 700392 / 26695) (Campylobacter pylori), this protein is tRNA modification GTPase MnmE.